We begin with the raw amino-acid sequence, 309 residues long: Taste receptor type 2 member 20 (309 aa).

Residues 1 to 6 (MMSFLH) lie on the Extracellular side of the membrane. The chain crosses the membrane as a helical span at residues 7–27 (IVFSILVVVAFILGNFANGFI). Residues 28–46 (ALINFIAWVKRQKISSADQ) are Cytoplasmic-facing. Residues 47–67 (IIAALAVSRVGLLWVILLHWY) form a helical membrane-spanning segment. The Extracellular portion of the chain corresponds to 68–79 (STVLNPTSSNLK). The helical transmembrane segment at 80 to 100 (VIIFISNAWAVTNHFSIWLAT) threads the bilayer. Residues 101–125 (SLSIFYLLKIVNFSRLIFHHLKRKA) lie on the Cytoplasmic side of the membrane. A helical transmembrane segment spans residues 126 to 146 (KSVVLVIVLGSLFFLVCHLVM). Residues 147–178 (KNTYINVWTEECEGNVTWKIKLRNAMHLSNLT) lie on the Extracellular side of the membrane. Residues 179–199 (VAMLANLIPFTLTLISFLLLI) form a helical membrane-spanning segment. The Cytoplasmic portion of the chain corresponds to 200-229 (YSLCKHLKKMQLHGKGSQDPSTKIHIKALQ). Residues 230-250 (TVTSFLILLAIYFLCLITSFW) form a helical membrane-spanning segment. Topologically, residues 251–259 (NSKMRPKEI) are extracellular. A helical transmembrane segment spans residues 260–280 (VLMLCQAFGIIYPSFHSFILI). Residues 281-309 (WGNKTLKQTFLSVLWQVTCWAKGQNQSTP) are Cytoplasmic-facing.

The protein belongs to the G-protein coupled receptor T2R family.

The protein resides in the membrane. In terms of biological role, receptor that may play a role in the perception of bitterness and is gustducin-linked. May play a role in sensing the chemical composition of the gastrointestinal content. The activity of this receptor may stimulate alpha gustducin, mediate PLC-beta-2 activation and lead to the gating of TRPM5. The sequence is that of Taste receptor type 2 member 20 (TAS2R20) from Pan paniscus (Pygmy chimpanzee).